The following is a 1388-amino-acid chain: Putative ATP-dependent RNA helicase DHX57 (1388 aa).

The segment covering 1 to 11 (MSSSVRRKGKP) has biased composition (basic residues). Disordered stretches follow at residues 1–107 (MSSS…MTSE) and 121–154 (EQGADAGSERGTSGEEEDSEPQCGEEQGWPAGQE). A compositionally biased stretch (gly residues) spans 34 to 51 (HGGGGGGGGSCGGGGGGS). Residues 79 to 89 (DSNKSKGETRP) show a composition bias toward basic and acidic residues. Phosphoserine occurs at positions 128 and 133. In terms of domain architecture, UBA spans 175 to 220 (PVPECAVSPLAVQKLSRYGFHTEHCQLALRICDGDLGAALEHLLRQ). The C3H1-type zinc finger occupies 299–326 (DTSPETCKFYLKGNCKFGSKCKFKHEVP). Ser-475 is modified (phosphoserine). The 168-residue stretch at 555–722 (LKLLSKHQVV…FSYCPVITIP (168 aa)) folds into the Helicase ATP-binding domain. Position 568-575 (568-575 (GMTGCGKT)) interacts with ATP. Positions 669-672 (DEVH) match the DEVH box motif. The Helicase C-terminal domain maps to 832 to 1012 (LIEALLEWIV…QLCLRIKILE (181 aa)).

It belongs to the DEAD box helicase family. DEAH subfamily.

It carries out the reaction ATP + H2O = ADP + phosphate + H(+). Functionally, probable ATP-binding RNA helicase. In Mus musculus (Mouse), this protein is Putative ATP-dependent RNA helicase DHX57 (Dhx57).